We begin with the raw amino-acid sequence, 435 residues long: Methylenetetrahydrofolate--tRNA-(uracil-5-)-methyltransferase TrmFO (435 aa).

Residue 7–12 (GAGLAG) coordinates FAD.

The protein belongs to the MnmG family. TrmFO subfamily. FAD serves as cofactor.

It is found in the cytoplasm. It carries out the reaction uridine(54) in tRNA + (6R)-5,10-methylene-5,6,7,8-tetrahydrofolate + NADH + H(+) = 5-methyluridine(54) in tRNA + (6S)-5,6,7,8-tetrahydrofolate + NAD(+). The catalysed reaction is uridine(54) in tRNA + (6R)-5,10-methylene-5,6,7,8-tetrahydrofolate + NADPH + H(+) = 5-methyluridine(54) in tRNA + (6S)-5,6,7,8-tetrahydrofolate + NADP(+). Catalyzes the folate-dependent formation of 5-methyl-uridine at position 54 (M-5-U54) in all tRNAs. The protein is Methylenetetrahydrofolate--tRNA-(uracil-5-)-methyltransferase TrmFO of Thermotoga sp. (strain RQ2).